The chain runs to 354 residues: Non-structural protein NS2 (354 aa).

Disordered regions lie at residues 163–196 (NERE…DNEA) and 229–269 (DERD…THIT). Composition is skewed to basic and acidic residues over residues 178-196 (SREE…DNEA) and 237-249 (DERG…KTLS). Residues 250–260 (DDDDQGEDASD) are compositionally biased toward acidic residues.

Its function is as follows. Single-stranded RNA-binding protein. The chain is Non-structural protein NS2 (Segment-8) from Bluetongue virus 17 (isolate USA) (BTV 17).